Consider the following 907-residue polypeptide: Leucine--tRNA ligase (907 aa).

A 'HIGH' region motif is present at residues Pro42–His52. The 'KMSKS' region motif lies at Thr651–Ser655. Lys654 lines the ATP pocket.

Belongs to the class-I aminoacyl-tRNA synthetase family.

The protein localises to the cytoplasm. The enzyme catalyses tRNA(Leu) + L-leucine + ATP = L-leucyl-tRNA(Leu) + AMP + diphosphate. The sequence is that of Leucine--tRNA ligase from Verminephrobacter eiseniae (strain EF01-2).